A 91-amino-acid chain; its full sequence is Bacterial microcompartment shell protein PduJ (91 aa).

The BMC domain maps to 4 to 88 (ALGLVETKGL…PHSDVEAILP (85 aa)).

It belongs to the bacterial microcompartments protein family. As to quaternary structure, homohexamer with a central pore of about 5.7 Angstroms in diameter. Interacts with PduP, which targets PduP to the BMC.

It localises to the bacterial microcompartment. The protein operates within polyol metabolism; 1,2-propanediol degradation. Functionally, one of the major shell proteins of the bacterial microcompartment (BMC) dedicated to 1,2-propanediol (1,2-PD) degradation. The isolated BMC shell component protein ratio for J:A:B':B:K:T:U is approximately 15:10:7:6:1:1:2. At least one of PduA or PduJ is required for BMC assembly; it must be encoded as the first gene in the pdu operon. Required for structural integrity of BMCs and to mitigate propionaldehyde toxicity, probably joins facets responsible for BMC closure. Edge residues (particularly Lys-25) are important for function and assembly of the BMC. 80% identical to PduA; although their pore regions appear structurally identical, unlike PduA plays no role in 1,2-PD diffusion into or out of the BMC shell. If pduJ is cloned in the chromosomal position of pduA it is able to complement a pduA deletion; it then has a functional pore as it assumes the transport functions of PduA. Overexpression of this protein leads to aberrant filaments that extend the length of the cell, cross the cleavage furrow and impair division. The filaments form nanotubes with a hollow center. Modeling suggests PduJ is probably the hub for binding multiple enzymes to the interior of the BMC; modeling suggests PduC, PduD, PduG and PduM are targeted to PduJ. The 1,2-propanediol (1,2-PD) degradation bacterial microcompartment (BMC) concentrates low levels of 1,2-PD catabolic enzymes, concentrates volatile reaction intermediates thus enhancing pathway flux and keeps the level of toxic, mutagenic propionaldehyde low. The polypeptide is Bacterial microcompartment shell protein PduJ (Salmonella typhimurium (strain LT2 / SGSC1412 / ATCC 700720)).